The primary structure comprises 108 residues: Nucleoid-associated protein Bphy_0952 (108 aa).

Residues 87–108 (AQEKMGGMTSGLPLPPGFKLPF) are disordered. A compositionally biased stretch (pro residues) spans 99-108 (PLPPGFKLPF).

It belongs to the YbaB/EbfC family. In terms of assembly, homodimer.

It localises to the cytoplasm. The protein resides in the nucleoid. Its function is as follows. Binds to DNA and alters its conformation. May be involved in regulation of gene expression, nucleoid organization and DNA protection. The protein is Nucleoid-associated protein Bphy_0952 of Paraburkholderia phymatum (strain DSM 17167 / CIP 108236 / LMG 21445 / STM815) (Burkholderia phymatum).